The sequence spans 682 residues: Methionine--tRNA ligase (682 aa).

Positions 15–25 (PYANGAIHLGH) match the 'HIGH' region motif. The Zn(2+) site is built by C146, C149, C159, and C162. The 'KMSKS' region signature appears at 331-335 (KMSKS). K334 serves as a coordination point for ATP. A tRNA-binding domain is found at 580-682 (DLAKLDMRVA…NGVTAGMQVK (103 aa)).

The protein belongs to the class-I aminoacyl-tRNA synthetase family. MetG type 1 subfamily. As to quaternary structure, homodimer. Zn(2+) is required as a cofactor.

The protein resides in the cytoplasm. The catalysed reaction is tRNA(Met) + L-methionine + ATP = L-methionyl-tRNA(Met) + AMP + diphosphate. Is required not only for elongation of protein synthesis but also for the initiation of all mRNA translation through initiator tRNA(fMet) aminoacylation. The chain is Methionine--tRNA ligase from Haemophilus influenzae (strain 86-028NP).